Here is a 150-residue protein sequence, read N- to C-terminus: Small ribosomal subunit protein uS11 (150 aa).

Residues 130–150 form a disordered region; the sequence is DVTPIPSDSTRRKSGRRGRRL. Basic residues predominate over residues 141–150; that stretch reads RKSGRRGRRL.

Belongs to the universal ribosomal protein uS11 family.

This Lupinus luteus (European yellow lupine) protein is Small ribosomal subunit protein uS11 (RPS14).